The following is a 348-amino-acid chain: Phenylalanine--tRNA ligase alpha subunit (348 aa).

Glutamate 269 lines the Mg(2+) pocket.

Belongs to the class-II aminoacyl-tRNA synthetase family. Phe-tRNA synthetase alpha subunit type 1 subfamily. Tetramer of two alpha and two beta subunits. Mg(2+) serves as cofactor.

It is found in the cytoplasm. It carries out the reaction tRNA(Phe) + L-phenylalanine + ATP = L-phenylalanyl-tRNA(Phe) + AMP + diphosphate + H(+). This is Phenylalanine--tRNA ligase alpha subunit from Dechloromonas aromatica (strain RCB).